Here is a 383-residue protein sequence, read N- to C-terminus: Succinyl-diaminopimelate desuccinylase (383 aa).

His-73 is a binding site for Zn(2+). Asp-75 is an active-site residue. Asp-107 lines the Zn(2+) pocket. Glu-141 functions as the Proton acceptor in the catalytic mechanism. Residues Glu-142, Glu-170, and His-356 each contribute to the Zn(2+) site.

This sequence belongs to the peptidase M20A family. DapE subfamily. Homodimer. The cofactor is Zn(2+). Requires Co(2+) as cofactor.

The enzyme catalyses N-succinyl-(2S,6S)-2,6-diaminopimelate + H2O = (2S,6S)-2,6-diaminopimelate + succinate. Its pathway is amino-acid biosynthesis; L-lysine biosynthesis via DAP pathway; LL-2,6-diaminopimelate from (S)-tetrahydrodipicolinate (succinylase route): step 3/3. Functionally, catalyzes the hydrolysis of N-succinyl-L,L-diaminopimelic acid (SDAP), forming succinate and LL-2,6-diaminopimelate (DAP), an intermediate involved in the bacterial biosynthesis of lysine and meso-diaminopimelic acid, an essential component of bacterial cell walls. The chain is Succinyl-diaminopimelate desuccinylase from Pseudomonas putida (strain ATCC 700007 / DSM 6899 / JCM 31910 / BCRC 17059 / LMG 24140 / F1).